We begin with the raw amino-acid sequence, 1213 residues long: MLNGHVVNYGKHRTRRSFSRIKEVLKLPNLTDVQTESYKWFLDKGIKEVFDDIMPISDFSGKLSLEYEGYKLQKPKYTVDEARDHDATYAAPMRVTLKLTNQETGEIKTQDVFFGDLPLMTESGSFIVNGAERVIVSQLVRSPGVYYTGDYDKNGRQIFGTTVIPNRGAWLEYETDAKNVSFVRVDRTRKLPLTVLIRAMGIGSDSDIIDMFGQSDTLQFTLDKDVHKNPADSRVAEAIKDIYERLRPGEPKTTDSSRSLLYARFFDPRRYDLAPVGRYKINKKLSLKNRLYGQTLAETLADPDTGEIIAKKDTVVTHEVMDKLAPYLDRDDFKMVTYQPSKEGVLPDPITVQEIKVYSKVDPEREVKLMSNGHIAEDVKHLTPADVLASINYFFALQDKIGTTDDIDHLGNRRIRRVGELLQNQFRIGLARMERVVRERMSIQDPLTVTPQQLINIRPIVASIKEFFGSSQLSQFMDQHNPLGELTHKRRMSALGPGGLTRDRAGYEVRDVHYTHYGRLCPIETPEGPNIGLINSLASYAIINKYGFIETPYRRVSWKTHKVTDKIDYLTADEEDNYIIAGANTPLNDDGSFKSDVILARQKEDNVEVTPDKIDYMDVIPKQVVSVASACIPFLENDDSNRALMGANQQRQAEPLINPHGSLVGTGMEYRAAHDSGAALIAKAAGTVEYVDANEIRIRREDGTLDKYTLEKYRRSNNSKSYNQTPNVKLGDHVDVSDVIANGPTMDHGELALGQNPLIAFMTWNMYNYEDAIMLSERLVKDDVYTSISIEDYESEARDTKLGPEEITRELPNIGEDALKDLDADGIVRVGAEVHDGDILVGKVTPKGVTELSAEERLLHAIFGEKAHEVRDTSLRVPHGGGGIVQDVKVYTREAGDELSPGVNTMVRVYIAQKRKIQVGDKMSGRHGNKGTVAAVVPEEDMPYLPDGTPVDICLNPMGVPSRMNIGQLLELHLGAAARQLGIHVATPVFAGANENDVWDTVRQAGIDKDGKTVIYDGRTGEPFHNRVSVGVMHYLKLTHMVDDKIHARSIGPYSLVTQQPLGGKAQFGGQRFGEMEVWALEAYGAAYTLQEILTYKSDDVVGRVKAYEAIVKGERIPKPGVPESFRVLVKELQSLGLDIRVLDMNHNEIELRDMDEDSSEHLNIDSLSRMAEEQEKKKLAEETGKSGDKKENKKDADKPVAPADESDDKVSK.

Residues 1169–1213 (SRMAEEQEKKKLAEETGKSGDKKENKKDADKPVAPADESDDKVSK) are disordered. The segment covering 1171 to 1199 (MAEEQEKKKLAEETGKSGDKKENKKDADK) has biased composition (basic and acidic residues).

The protein belongs to the RNA polymerase beta chain family. As to quaternary structure, the RNAP catalytic core consists of 2 alpha, 1 beta, 1 beta' and 1 omega subunit. When a sigma factor is associated with the core the holoenzyme is formed, which can initiate transcription.

The enzyme catalyses RNA(n) + a ribonucleoside 5'-triphosphate = RNA(n+1) + diphosphate. Functionally, DNA-dependent RNA polymerase catalyzes the transcription of DNA into RNA using the four ribonucleoside triphosphates as substrates. This Lactobacillus helveticus (strain DPC 4571) protein is DNA-directed RNA polymerase subunit beta.